The following is a 193-amino-acid chain: 7-methyl-GTP pyrophosphatase (193 aa).

The active-site Proton acceptor is Asp70.

It belongs to the Maf family. YceF subfamily. The cofactor is a divalent metal cation.

Its subcellular location is the cytoplasm. The catalysed reaction is N(7)-methyl-GTP + H2O = N(7)-methyl-GMP + diphosphate + H(+). Nucleoside triphosphate pyrophosphatase that hydrolyzes 7-methyl-GTP (m(7)GTP). May have a dual role in cell division arrest and in preventing the incorporation of modified nucleotides into cellular nucleic acids. The polypeptide is 7-methyl-GTP pyrophosphatase (Vibrio parahaemolyticus serotype O3:K6 (strain RIMD 2210633)).